Consider the following 260-residue polypeptide: Probable 6-oxopurine nucleoside phosphorylase (260 aa).

Phosphate contacts are provided by residues S9 and R49–H50. M182 contributes to the substrate binding site. Position 183 (T183) interacts with phosphate. N206 to A208 provides a ligand contact to substrate.

The protein belongs to the PNP/MTAP phosphorylase family. MTAP subfamily. Homohexamer. Dimer of a homotrimer.

It carries out the reaction a purine D-ribonucleoside + phosphate = a purine nucleobase + alpha-D-ribose 1-phosphate. It functions in the pathway purine metabolism; purine nucleoside salvage. In terms of biological role, purine nucleoside phosphorylase which is highly specific for 6-oxopurine nucleosides. Cleaves guanosine or inosine to respective bases and sugar-1-phosphate molecules. Involved in purine salvage. The sequence is that of Probable 6-oxopurine nucleoside phosphorylase from Moorella thermoacetica (strain ATCC 39073 / JCM 9320).